The chain runs to 128 residues: Cionin (128 aa).

An N-terminal signal peptide occupies residues 1 to 22; that stretch reads MGSNIVIYFSIIVIVTLNVNGV. Residues 23–108 constitute a propeptide that is removed on maturation; it reads PASDLFKSVS…NQGHMQRMDR (86 aa). Tyr110 and Tyr111 each carry sulfotyrosine. At Phe116 the chain carries Phenylalanine amide. A propeptide spanning residues 120 to 128 is cleaved from the precursor; the sequence is AIEDVDYEY.

Belongs to the gastrin/cholecystokinin family. In terms of tissue distribution, expressed in both the gut and the neural ganglion.

The protein localises to the secreted. The protein is Cionin of Ciona intestinalis (Transparent sea squirt).